The sequence spans 530 residues: Putative ABC transporter ATP-binding protein SSO1893 (530 aa).

2 ABC transporter domains span residues 6 to 243 and 282 to 516; these read IRDL…LGLE and ILFA…EPPL. Residues 38–45 and 314–321 contribute to the ATP site; these read GRSGSGKS and GKNGSGKT.

This sequence belongs to the ABC transporter superfamily.

Its subcellular location is the cell membrane. In terms of biological role, probably part of an ABC transporter complex. Responsible for energy coupling to the transport system. This Saccharolobus solfataricus (strain ATCC 35092 / DSM 1617 / JCM 11322 / P2) (Sulfolobus solfataricus) protein is Putative ABC transporter ATP-binding protein SSO1893.